Reading from the N-terminus, the 335-residue chain is UPF0324 membrane protein LMOf2365_2179 (335 aa).

8 helical membrane-spanning segments follow: residues threonine 10 to leucine 28, phenylalanine 33 to proline 55, alanine 91 to leucine 113, leucine 123 to isoleucine 142, valine 155 to isoleucine 177, valine 251 to isoleucine 270, phenylalanine 277 to leucine 299, and proline 309 to phenylalanine 331.

This sequence belongs to the UPF0324 family.

It localises to the cell membrane. In Listeria monocytogenes serotype 4b (strain F2365), this protein is UPF0324 membrane protein LMOf2365_2179.